We begin with the raw amino-acid sequence, 88 residues long: Apolipoprotein C-I (88 aa).

The N-terminal stretch at 1 to 26 is a signal peptide; that stretch reads MRLILSLPVLVVVLSMVLEGPAPAQA.

It belongs to the apolipoprotein C1 family.

The protein localises to the secreted. Its function is as follows. Inhibitor of lipoprotein binding to the low density lipoprotein (LDL) receptor, LDL receptor-related protein, and very low density lipoprotein (VLDL) receptor. Associates with high density lipoproteins (HDL) and the triacylglycerol-rich lipoproteins in the plasma and makes up about 10% of the protein of the VLDL and 2% of that of HDL. Appears to interfere directly with fatty acid uptake and is also the major plasma inhibitor of cholesteryl ester transfer protein (CETP). Binds free fatty acids and reduces their intracellular esterification. Modulates the interaction of APOE with beta-migrating VLDL and inhibits binding of beta-VLDL to the LDL receptor-related protein. The protein is Apolipoprotein C-I (APOC1) of Lycaon pictus (African wild dog).